Reading from the N-terminus, the 138-residue chain is Translation initiation factor 2 subunit beta (138 aa).

The protein belongs to the eIF-2-beta/eIF-5 family. Heterotrimer composed of an alpha, a beta and a gamma chain.

Its function is as follows. eIF-2 functions in the early steps of protein synthesis by forming a ternary complex with GTP and initiator tRNA. The sequence is that of Translation initiation factor 2 subunit beta from Methanopyrus kandleri (strain AV19 / DSM 6324 / JCM 9639 / NBRC 100938).